A 363-amino-acid polypeptide reads, in one-letter code: S-adenosylmethionine:tRNA ribosyltransferase-isomerase (363 aa).

It belongs to the QueA family. In terms of assembly, monomer.

The protein resides in the cytoplasm. It catalyses the reaction 7-aminomethyl-7-carbaguanosine(34) in tRNA + S-adenosyl-L-methionine = epoxyqueuosine(34) in tRNA + adenine + L-methionine + 2 H(+). The protein operates within tRNA modification; tRNA-queuosine biosynthesis. In terms of biological role, transfers and isomerizes the ribose moiety from AdoMet to the 7-aminomethyl group of 7-deazaguanine (preQ1-tRNA) to give epoxyqueuosine (oQ-tRNA). The sequence is that of S-adenosylmethionine:tRNA ribosyltransferase-isomerase from Haemophilus influenzae (strain PittGG).